The sequence spans 233 residues: Phosphoribosylformylglycinamidine synthase subunit PurQ (233 aa).

The region spanning 3–233 (SAILVFPGIN…GLVAHLERAA (231 aa)) is the Glutamine amidotransferase type-1 domain. The active-site Nucleophile is the C87. Active-site residues include H204 and E206.

Part of the FGAM synthase complex composed of 1 PurL, 1 PurQ and 2 PurS subunits.

It localises to the cytoplasm. The enzyme catalyses N(2)-formyl-N(1)-(5-phospho-beta-D-ribosyl)glycinamide + L-glutamine + ATP + H2O = 2-formamido-N(1)-(5-O-phospho-beta-D-ribosyl)acetamidine + L-glutamate + ADP + phosphate + H(+). The catalysed reaction is L-glutamine + H2O = L-glutamate + NH4(+). It participates in purine metabolism; IMP biosynthesis via de novo pathway; 5-amino-1-(5-phospho-D-ribosyl)imidazole from N(2)-formyl-N(1)-(5-phospho-D-ribosyl)glycinamide: step 1/2. Functionally, part of the phosphoribosylformylglycinamidine synthase complex involved in the purines biosynthetic pathway. Catalyzes the ATP-dependent conversion of formylglycinamide ribonucleotide (FGAR) and glutamine to yield formylglycinamidine ribonucleotide (FGAM) and glutamate. The FGAM synthase complex is composed of three subunits. PurQ produces an ammonia molecule by converting glutamine to glutamate. PurL transfers the ammonia molecule to FGAR to form FGAM in an ATP-dependent manner. PurS interacts with PurQ and PurL and is thought to assist in the transfer of the ammonia molecule from PurQ to PurL. This chain is Phosphoribosylformylglycinamidine synthase subunit PurQ, found in Nitrobacter hamburgensis (strain DSM 10229 / NCIMB 13809 / X14).